A 174-amino-acid polypeptide reads, in one-letter code: RxLR effector protein 207 (174 aa).

Positions Met1 to Ala20 are cleaved as a signal peptide. Positions Arg46–Arg62 match the RxLR-dEER motif. Positions Val82–Thr99 are disordered.

This sequence belongs to the RxLR effector family. As to quaternary structure, interacts with Nicotiana benthamiana ACD11, BPA1 (binding partner of ACD11), as well as BPA-like proteins BPL1, BPL2, BPL3 and BPL4.

It localises to the secreted. Its subcellular location is the host cell membrane. Functionally, secreted effector that activates ROS-mediated cell death in plant host and is essential for virulence. Plays a role in the transition from the biotrophic to necrotrophic stage. Associates with and promotes the degradation of Nicotiana benthamiana BPA1, BPL1, BPL2, and BPL4 to disrupt ACD11 stabilization in a 26S proteasome-dependent manner. The polypeptide is RxLR effector protein 207 (Phytophthora capsici).